Consider the following 338-residue polypeptide: Lipoate-protein ligase A (338 aa).

Residues 29-216 enclose the BPL/LPL catalytic domain; the sequence is PADQRVLFLW…AYCEHYQQQV (188 aa). Residues arginine 71, 76–79, and lysine 134 contribute to the ATP site; that span reads GAVF. A (R)-lipoate-binding site is contributed by lysine 134.

It belongs to the LplA family. Monomer.

The protein resides in the cytoplasm. The enzyme catalyses L-lysyl-[lipoyl-carrier protein] + (R)-lipoate + ATP = N(6)-[(R)-lipoyl]-L-lysyl-[lipoyl-carrier protein] + AMP + diphosphate + H(+). The protein operates within protein modification; protein lipoylation via exogenous pathway; protein N(6)-(lipoyl)lysine from lipoate: step 1/2. It participates in protein modification; protein lipoylation via exogenous pathway; protein N(6)-(lipoyl)lysine from lipoate: step 2/2. Functionally, catalyzes both the ATP-dependent activation of exogenously supplied lipoate to lipoyl-AMP and the transfer of the activated lipoyl onto the lipoyl domains of lipoate-dependent enzymes. The protein is Lipoate-protein ligase A of Vibrio cholerae serotype O1 (strain ATCC 39541 / Classical Ogawa 395 / O395).